A 99-amino-acid polypeptide reads, in one-letter code: Ribosomal processing cysteine protease Prp (99 aa).

Catalysis depends on His-16, which acts as the Proton donor. Catalysis depends on Cys-28, which acts as the Nucleophile.

It belongs to the Prp family. Homodimer.

Its function is as follows. An essential cysteine protease that cleaves the N-terminus from ribosomal protein bL27. This Mycoplasma genitalium (strain ATCC 33530 / DSM 19775 / NCTC 10195 / G37) (Mycoplasmoides genitalium) protein is Ribosomal processing cysteine protease Prp.